Here is a 500-residue protein sequence, read N- to C-terminus: Lysine--tRNA ligase (500 aa).

Residues Glu410 and Glu417 each contribute to the Mg(2+) site.

The protein belongs to the class-II aminoacyl-tRNA synthetase family. In terms of assembly, homodimer. Mg(2+) serves as cofactor.

It is found in the cytoplasm. It carries out the reaction tRNA(Lys) + L-lysine + ATP = L-lysyl-tRNA(Lys) + AMP + diphosphate. The chain is Lysine--tRNA ligase from Shewanella putrefaciens (strain CN-32 / ATCC BAA-453).